Reading from the N-terminus, the 787-residue chain is Alpha-glucosidase 2 (787 aa).

Catalysis depends on residues Asp407 and Glu410. Asp484 (proton donor) is an active-site residue.

This sequence belongs to the glycosyl hydrolase 31 family. Homohexamer.

The enzyme catalyses Hydrolysis of terminal, non-reducing (1-&gt;4)-linked alpha-D-glucose residues with release of alpha-D-glucose.. This Bacillus thermoamyloliquefaciens protein is Alpha-glucosidase 2.